Reading from the N-terminus, the 617-residue chain is Protein DWARF AND LOW-TILLERING (617 aa).

Disordered regions lie at residues 29–92 and 159–206; these read KRGS…HDED and PSLA…GVPA. The segment covering 171-187 has biased composition (low complexity); that stretch reads KSPSDSSSSSGTDGGSS. The 387-residue stretch at 208-594 folds into the GRAS domain; it reads GQAEREALEL…QPLYTVTAWT (387 aa). The segment at 215–295 is leucine repeat I (LRI); the sequence is LELVRALTAC…LTDDAFGGGD (81 aa). The segment at 301–366 is VHIID; that stretch reads LRILNAITPI…VPPAHVRITG (66 aa). The VHIID signature appears at 332–336; that stretch reads VHVID. A leucine repeat II (LRII) region spans residues 376-408; it reads ETGARLARVAAALGLAFEFHAVVDRLEDVRLWM. A PFYRE region spans residues 417–508; that stretch reads VAVNCVLAMH…EEMFAREIRN (92 aa). Residues 511-594 are SAW; sequence AFEGPERFER…QPLYTVTAWT (84 aa). The interval 596-617 is disordered; the sequence is AGDGAGGSTVSASTTASHSQQS. Residues 603 to 617 show a composition bias toward low complexity; it reads STVSASTTASHSQQS.

Belongs to the GRAS family. As to quaternary structure, interacts with GSK2. Interacts with SMOS1 (via C-terminus). Phosphorylated on serine and threonine residues by GSK2. Dephosphorylated during response to brassinosteroid. As to expression, expressed in the shoot apical meristem (SAM) and elongating cells of young seedlings. Expressed in leaf joints, culms, internodes, stems, young panicles, primary roots and lateral roots.

The protein localises to the nucleus. Functionally, probable transcription factor that acts as a positive regulator of brassinosteroid (BR) signaling. Functions downstream of BRI1 and GSK2 to modulate BR responses. Acts as a direct target of GSK2 kinase to mediate BR responses. Involved in feedback inhibition of BR biosynthetic genes. Repressed by BZR1. Cooperatively functions in a transactivating complex with SMOS1 to enhance the transcription of the SMOS1 target PHI-1, and regulate plant organ size. Interaction between SMOS1 and DLT is a crosstalk point for auxin and brassinosteroid signaling. The protein is Protein DWARF AND LOW-TILLERING of Oryza sativa subsp. japonica (Rice).